Reading from the N-terminus, the 430-residue chain is Tol-Pal system protein TolB (430 aa).

An N-terminal signal peptide occupies residues 1–21; the sequence is MKQAFRVALSVLMLFVAVAHA.

Belongs to the TolB family. In terms of assembly, the Tol-Pal system is composed of five core proteins: the inner membrane proteins TolA, TolQ and TolR, the periplasmic protein TolB and the outer membrane protein Pal. They form a network linking the inner and outer membranes and the peptidoglycan layer.

Its subcellular location is the periplasm. Part of the Tol-Pal system, which plays a role in outer membrane invagination during cell division and is important for maintaining outer membrane integrity. TolB occupies a key intermediary position in the Tol-Pal system because it communicates directly with both membrane-embedded components, Pal in the outer membrane and TolA in the inner membrane. The polypeptide is Tol-Pal system protein TolB (Erwinia tasmaniensis (strain DSM 17950 / CFBP 7177 / CIP 109463 / NCPPB 4357 / Et1/99)).